Here is a 105-residue protein sequence, read N- to C-terminus: UPF0122 protein OB1530 (105 aa).

This sequence belongs to the UPF0122 family.

Its function is as follows. Might take part in the signal recognition particle (SRP) pathway. This is inferred from the conservation of its genetic proximity to ftsY/ffh. May be a regulatory protein. This is UPF0122 protein OB1530 from Oceanobacillus iheyensis (strain DSM 14371 / CIP 107618 / JCM 11309 / KCTC 3954 / HTE831).